An 823-amino-acid polypeptide reads, in one-letter code: NAD-dependent histone deacetylase sirtuin-1 (823 aa).

Residues 41 to 67 are compositionally biased toward low complexity; that stretch reads LASTSTEAEAEAEATATTTEPATSELA. Residues 41 to 146 are disordered; that stretch reads LASTSTEAEA…SSSNCSSSVE (106 aa). Over residues 72–95 the composition is skewed to basic and acidic residues; sequence GEIKTKTLAAREEQEIGANLEHKT. A compositionally biased stretch (acidic residues) spans 104–137; sequence EDEDDEEEEEEDDEEEEEDDEEGITGTSNEDEDS. The region spanning 204-499 is the Deacetylase sirtuin-type domain; that stretch reads KLASVNTFDD…LCCDESVLTE (296 aa). NAD(+) is bound by residues 229-248 and 313-316; these read GAGV…NGIY and QNID. Residue His-331 is the Proton acceptor of the active site. Positions 339, 342, 363, and 366 each coordinate Zn(2+). NAD(+) is bound by residues 427-429, 452-454, and Ser-469; these read GSS and NRE. A phosphoserine mark is found at Ser-618 and Ser-621. Residues 698–707 are compositionally biased toward acidic residues; the sequence is DYSDDDDEEE. Disordered regions lie at residues 698-722 and 777-823; these read DYSD…GNVG and IIEQ…LAAV. The span at 798–813 shows a compositional bias: basic and acidic residues; that stretch reads PSEENKQQTQIERSEE. Positions 814–823 are enriched in pro residues; that stretch reads SPPPGQLAAV.

It belongs to the sirtuin family. Class I subfamily. In terms of assembly, interacts with the transcriptional repressors hairy (hry) and deadpan (dpn); via basic domains. Associates with the Esc/E(z) histone methyltransferase complex. Interacts directly with E(z) and HDAC1/Rpd3. Zn(2+) serves as cofactor.

The protein resides in the cytoplasm. It localises to the nucleus. The protein localises to the chromosome. The catalysed reaction is N(6)-acetyl-L-lysyl-[protein] + NAD(+) + H2O = 2''-O-acetyl-ADP-D-ribose + nicotinamide + L-lysyl-[protein]. In terms of biological role, NAD-dependent histone deacetylase involved in heterochromatic silencing. Mildly suppresses the heterochromatin-mediated silencing phenomenon known as position-effect variegation (PEV). Required for epigenetic silencing of the polycomb group proteins. Has histone H4 deacetylase activity in vitro. Required maternally for establishing proper segmentation of the embryo. Involved in sex determination. May be involved in the regulation of life span. The chain is NAD-dependent histone deacetylase sirtuin-1 from Drosophila melanogaster (Fruit fly).